The primary structure comprises 264 residues: Small ribosomal subunit protein eS1 (264 aa).

Residues 233–264 (GEGGGAGKPAGDETGAKVERADGYEPPVQESV) form a disordered region. The span at 242 to 255 (AGDETGAKVERADG) shows a compositional bias: basic and acidic residues.

Belongs to the eukaryotic ribosomal protein eS1 family. Component of the small ribosomal subunit. Mature ribosomes consist of a small (40S) and a large (60S) subunit. The 40S subunit contains about 33 different proteins and 1 molecule of RNA (18S). The 60S subunit contains about 49 different proteins and 3 molecules of RNA (28S, 5.8S and 5S). Part of the small subunit (SSU) processome, composed of more than 70 proteins and the RNA chaperone small nucleolar RNA (snoRNA) U3.

The protein localises to the cytoplasm. The protein resides in the nucleus. Its subcellular location is the nucleolus. Its function is as follows. Component of the small ribosomal subunit. The ribosome is a large ribonucleoprotein complex responsible for the synthesis of proteins in the cell. Part of the small subunit (SSU) processome, first precursor of the small eukaryotic ribosomal subunit. During the assembly of the SSU processome in the nucleolus, many ribosome biogenesis factors, an RNA chaperone and ribosomal proteins associate with the nascent pre-rRNA and work in concert to generate RNA folding, modifications, rearrangements and cleavage as well as targeted degradation of pre-ribosomal RNA by the RNA exosome. May play a role during erythropoiesis. The sequence is that of Small ribosomal subunit protein eS1 (rps3a) from Xenopus tropicalis (Western clawed frog).